Here is a 121-residue protein sequence, read N- to C-terminus: MARVKRGVTSHAKHKKTLEAATGFYGRRKNTIRAAKAAVDRSMQYATRDRRVKKRVFRALWIQRLNAAVRELGLTYSRFIDGLAKAGVEIDRKVLSELAISQPEAFKAIVEQAKSALATAG.

It belongs to the bacterial ribosomal protein bL20 family.

Functionally, binds directly to 23S ribosomal RNA and is necessary for the in vitro assembly process of the 50S ribosomal subunit. It is not involved in the protein synthesizing functions of that subunit. This is Large ribosomal subunit protein bL20 from Beijerinckia indica subsp. indica (strain ATCC 9039 / DSM 1715 / NCIMB 8712).